The following is a 128-amino-acid chain: Transcription antitermination protein NusB (128 aa).

Belongs to the NusB family.

Involved in transcription antitermination. Required for transcription of ribosomal RNA (rRNA) genes. Binds specifically to the boxA antiterminator sequence of the ribosomal RNA (rrn) operons. This chain is Transcription antitermination protein NusB, found in Listeria welshimeri serovar 6b (strain ATCC 35897 / DSM 20650 / CCUG 15529 / CIP 8149 / NCTC 11857 / SLCC 5334 / V8).